The primary structure comprises 275 residues: uncharacterized protein (275 aa).

Belongs to the SMP-30/CGR1 family.

This is an uncharacterized protein from Sulfolobus acidocaldarius (strain ATCC 33909 / DSM 639 / JCM 8929 / NBRC 15157 / NCIMB 11770).